A 546-amino-acid chain; its full sequence is Protein FAM124A (546 aa).

3 disordered regions span residues 1 to 37, 286 to 360, and 488 to 546; these read MDPK…SELS, FPKP…FQRS, and SSSS…EFYI. Residues 24–36 show a composition bias toward low complexity; that stretch reads SDYSHLSSTSSEL. Basic residues predominate over residues 286 to 302; sequence FPKPGRVHHASEKKRHS. Composition is skewed to polar residues over residues 304–324 and 347–360; these read PLPS…SPLN and ANST…FQRS. Residues 488-511 are compositionally biased toward low complexity; that stretch reads SSSSATARAAPPAPSTSTLTDSSP.

Belongs to the FAM124 family.

The polypeptide is Protein FAM124A (FAM124A) (Homo sapiens (Human)).